Here is a 287-residue protein sequence, read N- to C-terminus: Urease accessory protein UreD (287 aa).

This sequence belongs to the UreD family. As to quaternary structure, ureD, UreF and UreG form a complex that acts as a GTP-hydrolysis-dependent molecular chaperone, activating the urease apoprotein by helping to assemble the nickel containing metallocenter of UreC. The UreE protein probably delivers the nickel.

Its subcellular location is the cytoplasm. Required for maturation of urease via the functional incorporation of the urease nickel metallocenter. This is Urease accessory protein UreD from Herpetosiphon aurantiacus (strain ATCC 23779 / DSM 785 / 114-95).